The primary structure comprises 151 residues: Large ribosomal subunit protein uL22 (151 aa).

Residues 1-18 (MARINYSINGDPETTSKA) show a composition bias toward polar residues. Residues 1–23 (MARINYSINGDPETTSKAMGSEL) are disordered.

This sequence belongs to the universal ribosomal protein uL22 family. As to quaternary structure, part of the 50S ribosomal subunit.

In terms of biological role, this protein binds specifically to 23S rRNA. It makes multiple contacts with different domains of the 23S rRNA in the assembled 50S subunit and ribosome. The globular domain of the protein is located near the polypeptide exit tunnel on the outside of the subunit, while an extended beta-hairpin is found that lines the wall of the exit tunnel in the center of the 70S ribosome. The chain is Large ribosomal subunit protein uL22 from Methanosarcina acetivorans (strain ATCC 35395 / DSM 2834 / JCM 12185 / C2A).